A 523-amino-acid polypeptide reads, in one-letter code: Sensory neuron membrane protein 1 (523 aa).

Residues Met1 to Ala10 are Cytoplasmic-facing. The chain crosses the membrane as a helical span at residues Val11–Ile31. The Extracellular portion of the chain corresponds to Leu32 to Val458. N-linked (GlcNAc...) asparagine glycosylation is found at Asn67 and Asn229. 3 disulfide bridges follow: Cys268–Cys333, Cys297–Cys352, and Cys335–Cys341. Residue Asn440 is glycosylated (N-linked (GlcNAc...) asparagine). Residues Ser459 to Phe479 traverse the membrane as a helical segment. The Cytoplasmic segment spans residues His480–Met523. A disordered region spans residues Val499 to Met523.

Belongs to the CD36 family. As to expression, localizes to both male and female antennae but not the leg, wing, gut, head, or thoracic ganglia. Detected throughout the sensory epithelium, associating with both sex-pheromone sensilla and plant-volatile sensilla. Differentially expressed both among different sensilla and different neurons within a given sensillum. Expression coincides with that of several other olfactory-specific proteins that are involved in odor detection.

The protein resides in the cell membrane. Functionally, plays an olfactory role that is not restricted to pheromone sensitivity. The chain is Sensory neuron membrane protein 1 from Manduca sexta (Tobacco hawkmoth).